The sequence spans 475 residues: GDP-fucose protein O-fucosyltransferase 3 (475 aa).

The Cytoplasmic segment spans residues 1–8; the sequence is MVRMRRKR. Residues 9–29 traverse the membrane as a helical; Signal-anchor for type II membrane protein segment; it reads LWASCICFAAFFFLLVTLQVI. The Lumenal portion of the chain corresponds to 30 to 475; that stretch reads TELGNSENKA…QEFWMLVFKQ (446 aa). N-linked (GlcNAc...) asparagine glycans are attached at residues Asn-107, Asn-165, and Asn-315. Cysteines 386 and 389 form a disulfide. N-linked (GlcNAc...) asparagine glycosylation is present at Asn-462.

The protein belongs to the glycosyltransferase 10 family.

The protein resides in the endoplasmic reticulum membrane. The enzyme catalyses L-threonyl-[protein] + GDP-beta-L-fucose = 3-O-(alpha-L-fucosyl)-L-threonyl-[protein] + GDP + H(+). It carries out the reaction L-seryl-[protein] + GDP-beta-L-fucose = 3-O-(alpha-L-fucosyl)-L-seryl-[protein] + GDP + H(+). The protein operates within protein modification; protein glycosylation. Protein O-fucosyltransferase that specifically catalyzes O-fucosylation of serine or threonine residues in EMI domains of target proteins. Attaches fucose through an O-glycosidic linkage. O-fucosylation of EMI domain-containing proteins may be required for facilitating protein folding and secretion. In Gallus gallus (Chicken), this protein is GDP-fucose protein O-fucosyltransferase 3 (FUT10).